Here is an 895-residue protein sequence, read N- to C-terminus: Probable LRR receptor-like serine/threonine-protein kinase At5g48740 (895 aa).

A signal peptide spans 1–16; that stretch reads MLFWVLLSSFCVFCFS. Over 17–544 the chain is Extracellular; the sequence is SPDGFLSLSC…INKKQRKQNR (528 aa). N-linked (GlcNAc...) asparagine glycans are attached at residues asparagine 36, asparagine 50, asparagine 60, asparagine 140, asparagine 195, asparagine 234, and asparagine 318. 6 LRR repeats span residues 385-407, 408-430, 431-453, 454-477, 478-500, and 511-532; these read RVTSLFLSKINLRSISPTFGDLL, DLKTLDLHNTSLTGAIQNVGSLK, DLQKLNLSFNQLESFGSELEDLV, NLEVLDLQNNSLQGSVPETLGKLK, KLRLLNLENNNLVGPLPQSLNIT, and CLSFSSISCNNVSSTIDTPQVT. N-linked (GlcNAc...) asparagine glycans are attached at residues asparagine 416, asparagine 436, asparagine 462, asparagine 498, and asparagine 521. A helical transmembrane segment spans residues 545-565; that stretch reads IAILLGVSGGALFATFLVFVF. Residues 566-895 lie on the Cytoplasmic side of the membrane; sequence MSIFTRRQRN…SYLAASAHTD (330 aa). One can recognise a Protein kinase domain in the interval 606 to 888; that stretch reads RNFKEVIGRG…EAYSLQLSYL (283 aa). ATP contacts are provided by residues 612 to 620 and lysine 634; that span reads IGRGSFGAV. The residue at position 679 (tyrosine 679) is a Phosphotyrosine. The Proton acceptor role is filled by aspartate 732. Serine 736 bears the Phosphoserine mark. Threonine 767 and threonine 772 each carry phosphothreonine. Tyrosine 780 is subject to Phosphotyrosine.

It belongs to the protein kinase superfamily. Ser/Thr protein kinase family.

The protein localises to the membrane. The catalysed reaction is L-seryl-[protein] + ATP = O-phospho-L-seryl-[protein] + ADP + H(+). It carries out the reaction L-threonyl-[protein] + ATP = O-phospho-L-threonyl-[protein] + ADP + H(+). In Arabidopsis thaliana (Mouse-ear cress), this protein is Probable LRR receptor-like serine/threonine-protein kinase At5g48740.